The chain runs to 618 residues: Proline--tRNA ligase (618 aa).

It belongs to the class-II aminoacyl-tRNA synthetase family. ProS type 1 subfamily. As to quaternary structure, homodimer.

It is found in the cytoplasm. It catalyses the reaction tRNA(Pro) + L-proline + ATP = L-prolyl-tRNA(Pro) + AMP + diphosphate. Functionally, catalyzes the attachment of proline to tRNA(Pro) in a two-step reaction: proline is first activated by ATP to form Pro-AMP and then transferred to the acceptor end of tRNA(Pro). As ProRS can inadvertently accommodate and process non-cognate amino acids such as alanine and cysteine, to avoid such errors it has two additional distinct editing activities against alanine. One activity is designated as 'pretransfer' editing and involves the tRNA(Pro)-independent hydrolysis of activated Ala-AMP. The other activity is designated 'posttransfer' editing and involves deacylation of mischarged Ala-tRNA(Pro). The misacylated Cys-tRNA(Pro) is not edited by ProRS. This chain is Proline--tRNA ligase, found in Streptococcus pyogenes serotype M12 (strain MGAS2096).